The sequence spans 420 residues: CinA-like protein (420 aa).

This sequence belongs to the CinA family.

This Syntrophus aciditrophicus (strain SB) protein is CinA-like protein.